The primary structure comprises 244 residues: Ras-like protein family member 11B (244 aa).

The interval 19 to 242 is small GTPase-like; it reads PSSRVIKIAV…VLSAKVRTVT (224 aa). GTP contacts are provided by residues 30–37, 77–81, and 142–145; these read GGSGVGKT, DTPGV, and NKAD. The disordered stretch occupies residues 200–222; sequence INATSSVTEKKRSPLIPRPKSPN.

The protein belongs to the small GTPase superfamily. Ras family.

It carries out the reaction GTP + H2O = GDP + phosphate + H(+). The chain is Ras-like protein family member 11B from Danio rerio (Zebrafish).